Here is a 376-residue protein sequence, read N- to C-terminus: UDP-N-acetylglucosamine--N-acetylmuramyl-(pentapeptide) pyrophosphoryl-undecaprenol N-acetylglucosamine transferase (376 aa).

UDP-N-acetyl-alpha-D-glucosamine-binding positions include 14 to 16 (TGG), asparagine 128, arginine 169, serine 201, isoleucine 256, and glutamine 301.

This sequence belongs to the glycosyltransferase 28 family. MurG subfamily.

The protein localises to the cell inner membrane. It catalyses the reaction di-trans,octa-cis-undecaprenyl diphospho-N-acetyl-alpha-D-muramoyl-L-alanyl-D-glutamyl-meso-2,6-diaminopimeloyl-D-alanyl-D-alanine + UDP-N-acetyl-alpha-D-glucosamine = di-trans,octa-cis-undecaprenyl diphospho-[N-acetyl-alpha-D-glucosaminyl-(1-&gt;4)]-N-acetyl-alpha-D-muramoyl-L-alanyl-D-glutamyl-meso-2,6-diaminopimeloyl-D-alanyl-D-alanine + UDP + H(+). Its pathway is cell wall biogenesis; peptidoglycan biosynthesis. Functionally, cell wall formation. Catalyzes the transfer of a GlcNAc subunit on undecaprenyl-pyrophosphoryl-MurNAc-pentapeptide (lipid intermediate I) to form undecaprenyl-pyrophosphoryl-MurNAc-(pentapeptide)GlcNAc (lipid intermediate II). The protein is UDP-N-acetylglucosamine--N-acetylmuramyl-(pentapeptide) pyrophosphoryl-undecaprenol N-acetylglucosamine transferase of Phocaeicola vulgatus (strain ATCC 8482 / DSM 1447 / JCM 5826 / CCUG 4940 / NBRC 14291 / NCTC 11154) (Bacteroides vulgatus).